A 327-amino-acid polypeptide reads, in one-letter code: DNA repair protein XRCC4 (327 aa).

The interaction with IFFO1 stretch occupies residues 1–211 (MERKVSRISL…QLEKNLKPER (211 aa)). The residue at position 53 (serine 53) is a Phosphoserine. 2 coiled-coil regions span residues 133 to 153 (IAEK…LLRD) and 183 to 213 (LNEK…ERET). Interaction with LIG4 regions lie at residues 179–210 (FILV…LKPE) and 179–211 (FILV…KPER). Serine 192 is modified (phosphoserine). Lysine 208 participates in a covalent cross-link: Glycyl lysine isopeptide (Lys-Gly) (interchain with G-Cter in SUMO). The residue at position 226 (tyrosine 226) is a Phosphotyrosine. Serine 229 is modified (phosphoserine). Residue threonine 230 is modified to Phosphothreonine. A phosphoserine mark is found at serine 249 and serine 253. A disordered region spans residues 255-327 (DVTDIAPSRK…RNSSPEDIFD (73 aa)). The Nuclear localization signal motif lies at 263–268 (RKRRHH). Residue lysine 289 forms a Glycyl lysine isopeptide (Lys-Gly) (interchain with G-Cter in ubiquitin) linkage. A phosphoserine mark is found at serine 294, serine 295, serine 308, and serine 313. Positions 308 to 327 (SAGNMSLETLRNSSPEDIFD) are enriched in polar residues. Threonine 316 is subject to Phosphothreonine. Serine 320 and serine 321 each carry phosphoserine.

The protein belongs to the XRCC4-XLF family. XRCC4 subfamily. As to quaternary structure, homodimer and homotetramer in solution. Interacts with NHEJ1/XLF; the interaction is direct and is mediated via a head-to-head interaction between N-terminal head regions. Interacts with LIG4; the LIG4-XRCC4 subcomplex has a 1:2 stoichiometry and XRCC4 is required for LIG4 stability. Component of the core long-range non-homologous end joining (NHEJ) complex (also named DNA-PK complex) composed of PRKDC, LIG4, XRCC4, XRCC6/Ku70, XRCC5/Ku86 and NHEJ1/XLF. Additional component of the NHEJ complex includes PAXX. Following autophosphorylation, PRKDC dissociates from DNA, leading to formation of the short-range NHEJ complex, composed of LIG4, XRCC4, XRCC6/Ku70, XRCC5/Ku86 and NHEJ1/XLF. Interacts with PRKDC; the interaction is direct. Interacts with XRCC6/Ku70; the interaction is direct. Interacts with APTX and APLF. Forms a heterotetramer with IFFO1; the interaction involves LIG4-free XRCC4 and leads to the relocalization of IFFO1 to the sites of DNA damage. Interacts with PNKP; mainly interacts with PNKP when phosphorylated at Thr-230, but is also able to interact at much lower level with PNKP when not unphosphorylated. Interacts with POLL (DNA polymerase lambda). In terms of assembly, interacts with XKR4; interacts with the processed form of XKR4, which is cleaved by caspase. In terms of processing, phosphorylated by PRKDC at the C-terminus in response to DNA damage; Ser-253 constitutes the main phosphorylation sites. Phosphorylations by PRKDC at the C-terminus of XRCC4 and NHEJ1/XLF are highly redundant and regulate ability of the XRCC4-NHEJ1/XLF subcomplex to bridge DNA. Phosphorylation by PRKDC does not prevent interaction with NHEJ1/XLF but disrupts ability to bridge DNA and promotes detachment from DNA. Phosphorylation at Ser-320 and Ser-321 by PRKDC promotes recognition by the SCF(FBXW7) complex and subsequent ubiquitination via 'Lys-63'-linked ubiquitin. Phosphorylation at Thr-230 by CK2 promotes interaction with PNKP; regulating PNKP activity and localization to DNA damage sites. Phosphorylation by CK2 promotes interaction with APTX. Post-translationally, ubiquitinated at Lys-289 by the SCF(FBXW7) complex via 'Lys-63'-linked ubiquitination, thereby promoting double-strand break repair: the SCF(FBXW7) complex specifically recognizes XRCC4 when phosphorylated at Ser-320 and Ser-321 by PRKDC, and 'Lys-63'-linked ubiquitination facilitates DNA non-homologous end joining (NHEJ) by enhancing association with XRCC5/Ku80 and XRCC6/Ku70. Monoubiquitinated. Undergoes proteolytic processing by caspase-3 (CASP3). This generates the protein XRCC4, C-terminus (XRCC4/C), which translocates to the cytoplasm and activates phospholipid scramblase activity of XKR4, thereby promoting phosphatidylserine exposure on apoptotic cell surface.

It is found in the nucleus. The protein localises to the chromosome. The protein resides in the cytoplasm. In terms of biological role, DNA non-homologous end joining (NHEJ) core factor, required for double-strand break repair and V(D)J recombination. Acts as a scaffold protein that regulates recruitment of other proteins to DNA double-strand breaks (DSBs). Associates with NHEJ1/XLF to form alternating helical filaments that bridge DNA and act like a bandage, holding together the broken DNA until it is repaired. The XRCC4-NHEJ1/XLF subcomplex binds to the DNA fragments of a DSB in a highly diffusive manner and robustly bridges two independent DNA molecules, holding the broken DNA fragments in close proximity to one other. The mobility of the bridges ensures that the ends remain accessible for further processing by other repair factors. Plays a key role in the NHEJ ligation step of the broken DNA during DSB repair via direct interaction with DNA ligase IV (LIG4): the LIG4-XRCC4 subcomplex reseals the DNA breaks after the gap filling is completed. XRCC4 stabilizes LIG4, regulates its subcellular localization and enhances LIG4's joining activity. Binding of the LIG4-XRCC4 subcomplex to DNA ends is dependent on the assembly of the DNA-dependent protein kinase complex DNA-PK to these DNA ends. Promotes displacement of PNKP from processed strand break termini. Its function is as follows. Acts as an activator of the phospholipid scramblase activity of XKR4. This form, which is generated upon caspase-3 (CASP3) cleavage, translocates into the cytoplasm and interacts with XKR4, thereby promoting phosphatidylserine scramblase activity of XKR4 and leading to phosphatidylserine exposure on apoptotic cell surface. The protein is DNA repair protein XRCC4 of Cricetulus griseus (Chinese hamster).